The sequence spans 432 residues: 3-phosphoshikimate 1-carboxyvinyltransferase (432 aa).

Positions 23, 24, and 28 each coordinate 3-phosphoshikimate. Lys23 serves as a coordination point for phosphoenolpyruvate. Phosphoenolpyruvate-binding residues include Gly99 and Arg127. 7 residues coordinate 3-phosphoshikimate: Ser172, Ser173, Gln174, Ser200, Asp317, Asn341, and Lys345. Gln174 contacts phosphoenolpyruvate. Catalysis depends on Asp317, which acts as the Proton acceptor. Phosphoenolpyruvate is bound by residues Arg349, Arg391, and Lys416.

This sequence belongs to the EPSP synthase family. Monomer.

Its subcellular location is the cytoplasm. The catalysed reaction is 3-phosphoshikimate + phosphoenolpyruvate = 5-O-(1-carboxyvinyl)-3-phosphoshikimate + phosphate. It functions in the pathway metabolic intermediate biosynthesis; chorismate biosynthesis; chorismate from D-erythrose 4-phosphate and phosphoenolpyruvate: step 6/7. Functionally, catalyzes the transfer of the enolpyruvyl moiety of phosphoenolpyruvate (PEP) to the 5-hydroxyl of shikimate-3-phosphate (S3P) to produce enolpyruvyl shikimate-3-phosphate and inorganic phosphate. The sequence is that of 3-phosphoshikimate 1-carboxyvinyltransferase from Blochmanniella pennsylvanica (strain BPEN).